The chain runs to 304 residues: MYYGLDIGGTKIELAVFNEELEKLYSERVPTPKTDYEEWLNTIVDLVNRADEKFGEVGTVGLGVPGFVNQQTGLAEITNIRVADNKPILRDLSVRLGREVRAENDANCFALSEAWDTENQQYPTVLGLILGTGFGGGFVLNGKVHSGQVGMAGELGHLQLNYHALKLLGWDNAPIYQCGCGNKACLDNYLSGRGFEMLYRDLKGETLSAREIIDLFYQGNESAVDFVNLFVELAAISIGNIITAFDPHMIVLGGGLSNFDYLYEALPKALPPHLMRTAKVPPIKKAKHGDSGGVRGAAALFLTK.

ATP-binding positions include 4-11 and 133-140; these read GLDIGGTK and GFGGGFVL. Residues His157, Cys178, Cys180, and Cys185 each coordinate Zn(2+).

It belongs to the ROK (NagC/XylR) family. NagK subfamily.

The catalysed reaction is N-acetyl-D-glucosamine + ATP = N-acetyl-D-glucosamine 6-phosphate + ADP + H(+). It participates in cell wall biogenesis; peptidoglycan recycling. Functionally, catalyzes the phosphorylation of N-acetyl-D-glucosamine (GlcNAc) derived from cell-wall degradation, yielding GlcNAc-6-P. The sequence is that of N-acetyl-D-glucosamine kinase from Haemophilus influenzae (strain 86-028NP).